The chain runs to 276 residues: MKAQILREMKVLKAIEPEFEVQRRVAFIKTKLKEARSKALVLGISGGVDSSTAGRLCQLAVDSLNSEQANSDYQFIAVRLPYHIQKDEHEAQLACQFIQPSKLVTVNVHQGVDAVHGATLAAFVEAGLTLPDAAKVDFVKGNVKARMRMIAQYELAGLVGGLVVGTDHSAENITGFYTKWGDGACDLAPLFGLNKRQVRQLAAYLGAPESLVYKAPTADLEDNQPLLEDEVALGLTYAQIDDFLEGKEVDKSVETKLINIYKATQHKRQPIATIYD.

Position 43 to 50 (43 to 50 (GISGGVDS)) interacts with ATP. Aspartate 49 provides a ligand contact to Mg(2+). Arginine 146 lines the deamido-NAD(+) pocket. Threonine 166 lines the ATP pocket. Residue glutamate 171 participates in Mg(2+) binding. Deamido-NAD(+) contacts are provided by lysine 179 and aspartate 186. ATP-binding residues include lysine 195 and threonine 217. 266-267 (HK) is a deamido-NAD(+) binding site.

It belongs to the NAD synthetase family. Homodimer.

The enzyme catalyses deamido-NAD(+) + NH4(+) + ATP = AMP + diphosphate + NAD(+) + H(+). The protein operates within cofactor biosynthesis; NAD(+) biosynthesis; NAD(+) from deamido-NAD(+) (ammonia route): step 1/1. In terms of biological role, catalyzes the ATP-dependent amidation of deamido-NAD to form NAD. Uses ammonia as a nitrogen source. The chain is NH(3)-dependent NAD(+) synthetase from Shewanella putrefaciens (strain CN-32 / ATCC BAA-453).